We begin with the raw amino-acid sequence, 127 residues long: Mitochondrial pyruvate carrier 2 (127 aa).

Residues 2-40 (AAAGARGLRATYHRLMDKVELLLPKKLRPLYNHPAGPRT) are Mitochondrial matrix-facing. The residue at position 26 (K26) is an N6-acetyllysine. The helical transmembrane segment at 41 to 61 (VFFWAPIMKWGLVCAGLADMA) threads the bilayer. Over 62 to 72 (RPAEKLSTAQS) the chain is Mitochondrial intermembrane. A helical membrane pass occupies residues 73–90 (TVLMATGFIWSRYSLVII). Residues 91-92 (PK) lie on the Mitochondrial matrix side of the membrane. The helical transmembrane segment at 93–115 (NWSLFAVNFFVGSAGASQLFRIW) threads the bilayer. Residues 116–127 (RYNQELKSKGIQ) are Mitochondrial intermembrane-facing.

It belongs to the mitochondrial pyruvate carrier (MPC) (TC 2.A.105) family. In terms of assembly, homodimer. Homooligomer. Forms heterodimers with MPC1 and MPC1L. The heterodimer is the more stable and dominant form.

It is found in the mitochondrion inner membrane. The enzyme catalyses pyruvate(out) + H(+)(out) = pyruvate(in) + H(+)(in). In terms of biological role, mediates the uptake of pyruvate into mitochondria. In Mus musculus (Mouse), this protein is Mitochondrial pyruvate carrier 2 (Mpc2).